The following is a 257-amino-acid chain: Snake venom serine protease rhinocerase 4 (257 aa).

The first 17 residues, 1 to 17 (VLIRVLANLLVLQLSYA), serve as a signal peptide directing secretion. Residues 18-23 (QKSSEL) constitute a propeptide that is removed on maturation. A Peptidase S1 domain is found at 24–248 (VIGGAECNIN…YTDWIRSIIG (225 aa)). Cystine bridges form between cysteine 30/cysteine 162, cysteine 49/cysteine 65, cysteine 97/cysteine 255, cysteine 141/cysteine 209, cysteine 173/cysteine 188, and cysteine 199/cysteine 224. Asparagine 43 is a glycosylation site (N-linked (GlcNAc...) asparagine). Catalysis depends on histidine 64, which acts as the Charge relay system. N-linked (GlcNAc...) asparagine glycosylation is found at asparagine 78 and asparagine 100. The active-site Charge relay system is aspartate 109. Serine 203 functions as the Charge relay system in the catalytic mechanism. Asparagine 250 carries N-linked (GlcNAc...) asparagine glycosylation.

This sequence belongs to the peptidase S1 family. Snake venom subfamily. As to expression, expressed by the venom gland.

It is found in the secreted. Snake venom serine protease that may act in the hemostasis system of the prey. The chain is Snake venom serine protease rhinocerase 4 from Bitis rhinoceros (West African gaboon viper).